A 179-amino-acid polypeptide reads, in one-letter code: Large ribosomal subunit protein uL5 (179 aa).

It belongs to the universal ribosomal protein uL5 family. In terms of assembly, part of the 50S ribosomal subunit; part of the 5S rRNA/L5/L18/L25 subcomplex. Contacts the 5S rRNA and the P site tRNA. Forms a bridge to the 30S subunit in the 70S ribosome.

In terms of biological role, this is one of the proteins that bind and probably mediate the attachment of the 5S RNA into the large ribosomal subunit, where it forms part of the central protuberance. In the 70S ribosome it contacts protein S13 of the 30S subunit (bridge B1b), connecting the 2 subunits; this bridge is implicated in subunit movement. Contacts the P site tRNA; the 5S rRNA and some of its associated proteins might help stabilize positioning of ribosome-bound tRNAs. The sequence is that of Large ribosomal subunit protein uL5 from Histophilus somni (strain 129Pt) (Haemophilus somnus).